We begin with the raw amino-acid sequence, 521 residues long: Glucomannan 4-beta-mannosyltransferase 1 (521 aa).

Residues 22 to 42 (VIVPLLRLAVAVCLTMSVLLF) traverse the membrane as a helical segment. The active site involves aspartate 123. Aspartate 182 and aspartate 184 together coordinate substrate. Residue aspartate 276 is part of the active site. 4 helical membrane passes run 355–375 (IIAH…TIFV), 391–411 (IITL…FFWI), 471–491 (VTEL…LAFG), and 495–515 (FFIY…GYVG).

The protein belongs to the glycosyltransferase 2 family. Plant cellulose synthase-like A subfamily.

It is found in the golgi apparatus membrane. It catalyses the reaction GDP-mannose + (glucomannan)n = GDP + (glucomannan)n+1.. Possesses glucomannan synthase and mannan synthase activities in vitro. Mannan synthase consists of a 4-beta-mannosyltransferase activity on mannan using GDP-mannose. The beta-1,4-mannan product is the backbone for galactomannan synthesis by galactomannan galactosyltransferase. Galactomannan is a noncellulosic polysaccharides of plant cell wall. The sequence is that of Glucomannan 4-beta-mannosyltransferase 1 from Oryza sativa subsp. japonica (Rice).